The sequence spans 236 residues: Endonuclease V (236 aa).

Positions 47 and 115 each coordinate Mg(2+).

It belongs to the endonuclease V family. Mg(2+) serves as cofactor.

Its subcellular location is the cytoplasm. The enzyme catalyses Endonucleolytic cleavage at apurinic or apyrimidinic sites to products with a 5'-phosphate.. Its function is as follows. DNA repair enzyme involved in the repair of deaminated bases. Selectively cleaves double-stranded DNA at the second phosphodiester bond 3' to a deoxyinosine leaving behind the intact lesion on the nicked DNA. The polypeptide is Endonuclease V (Xanthomonas campestris pv. campestris (strain 8004)).